A 208-amino-acid chain; its full sequence is MKIVEVKHPLIKHKIGLMRAADVSTKDFRALATEVGSLLTYEATSDLETEVVTIEGWNGPVEIERIKGKKVTVVPILRAGLGMMDGVLEHIPSARISVVGIYRNEETLEPVPYFKKLANDVGERLAIVVDPMLATGGSMIATLDLLKAAGCKQIKVLVLVAAPEGIKALEAAHPDIELYTAAIDSHLNENGYIIPGLGDAGDKIFGTK.

5-phospho-alpha-D-ribose 1-diphosphate is bound by residues arginine 78, arginine 103, and 130–138 (DPMLATGGS). Uracil contacts are provided by residues isoleucine 193 and 198 to 200 (GDA). Residue aspartate 199 participates in 5-phospho-alpha-D-ribose 1-diphosphate binding.

It belongs to the UPRTase family. Mg(2+) serves as cofactor.

The enzyme catalyses UMP + diphosphate = 5-phospho-alpha-D-ribose 1-diphosphate + uracil. Its pathway is pyrimidine metabolism; UMP biosynthesis via salvage pathway; UMP from uracil: step 1/1. Its activity is regulated as follows. Allosterically activated by GTP. Catalyzes the conversion of uracil and 5-phospho-alpha-D-ribose 1-diphosphate (PRPP) to UMP and diphosphate. The sequence is that of Uracil phosphoribosyltransferase from Glaesserella parasuis serovar 5 (strain SH0165) (Haemophilus parasuis).